Here is a 250-residue protein sequence, read N- to C-terminus: 3-deoxy-manno-octulosonate cytidylyltransferase (250 aa).

It belongs to the KdsB family.

Its subcellular location is the cytoplasm. It catalyses the reaction 3-deoxy-alpha-D-manno-oct-2-ulosonate + CTP = CMP-3-deoxy-beta-D-manno-octulosonate + diphosphate. Its pathway is nucleotide-sugar biosynthesis; CMP-3-deoxy-D-manno-octulosonate biosynthesis; CMP-3-deoxy-D-manno-octulosonate from 3-deoxy-D-manno-octulosonate and CTP: step 1/1. It participates in bacterial outer membrane biogenesis; lipopolysaccharide biosynthesis. Activates KDO (a required 8-carbon sugar) for incorporation into bacterial lipopolysaccharide in Gram-negative bacteria. This chain is 3-deoxy-manno-octulosonate cytidylyltransferase, found in Legionella pneumophila subsp. pneumophila (strain Philadelphia 1 / ATCC 33152 / DSM 7513).